The following is a 46-amino-acid chain: Large ribosomal subunit protein bL34 (46 aa).

This sequence belongs to the bacterial ribosomal protein bL34 family.

The chain is Large ribosomal subunit protein bL34 from Synechococcus sp. (strain JA-2-3B'a(2-13)) (Cyanobacteria bacterium Yellowstone B-Prime).